Reading from the N-terminus, the 443-residue chain is Ribosomal protein uS12 methylthiotransferase RimO (443 aa).

In terms of domain architecture, MTTase N-terminal spans 5 to 116 (PSVAVAHLGC…IVDVIQRAEA (112 aa)). [4Fe-4S] cluster-binding residues include Cys-14, Cys-50, Cys-79, Cys-154, Cys-158, and Cys-161. Residues 140–370 (TTTEGTAYVR…ALQQPISWQQ (231 aa)) form the Radical SAM core domain. In terms of domain architecture, TRAM spans 372-442 (QQEVGKTVQV…AYDLQGQLVS (71 aa)).

The protein belongs to the methylthiotransferase family. RimO subfamily. Requires [4Fe-4S] cluster as cofactor.

The protein localises to the cytoplasm. It carries out the reaction L-aspartate(89)-[ribosomal protein uS12]-hydrogen + (sulfur carrier)-SH + AH2 + 2 S-adenosyl-L-methionine = 3-methylsulfanyl-L-aspartate(89)-[ribosomal protein uS12]-hydrogen + (sulfur carrier)-H + 5'-deoxyadenosine + L-methionine + A + S-adenosyl-L-homocysteine + 2 H(+). Its function is as follows. Catalyzes the methylthiolation of an aspartic acid residue of ribosomal protein uS12. This Acaryochloris marina (strain MBIC 11017) protein is Ribosomal protein uS12 methylthiotransferase RimO.